Consider the following 349-residue polypeptide: Phosphate acyltransferase (349 aa).

This sequence belongs to the PlsX family. As to quaternary structure, homodimer. Probably interacts with PlsY.

It localises to the cytoplasm. The enzyme catalyses a fatty acyl-[ACP] + phosphate = an acyl phosphate + holo-[ACP]. It functions in the pathway lipid metabolism; phospholipid metabolism. Catalyzes the reversible formation of acyl-phosphate (acyl-PO(4)) from acyl-[acyl-carrier-protein] (acyl-ACP). This enzyme utilizes acyl-ACP as fatty acyl donor, but not acyl-CoA. The chain is Phosphate acyltransferase from Rhodospirillum rubrum (strain ATCC 11170 / ATH 1.1.1 / DSM 467 / LMG 4362 / NCIMB 8255 / S1).